A 635-amino-acid polypeptide reads, in one-letter code: Putative adagio-like protein 2 (635 aa).

Residues 1-25 are compositionally biased toward acidic residues; it reads MEWDSDSEGSGDEEEEEEEEEEEGV. The disordered stretch occupies residues 1-32; that stretch reads MEWDSDSEGSGDEEEEEEEEEEEGVEVGGGGD. The PAS domain maps to 44 to 123; the sequence is ALAIEGVLGA…TDIRRCLEEG (80 aa). The residue at position 91 (Cys-91) is an S-4a-FMN cysteine. In terms of domain architecture, F-box spans 209–255; it reads SDLFLLSDEVLCQKILSRLSPRDIASVNSVCKRLYHLTRNDDLWRMV. Kelch repeat units lie at residues 371–421, 423–474, 476–530, and 542–594; these read RLVL…TLDG, KLVV…VYDG, KILM…PPPR, and RILI…VVGG.

It belongs to the ADAGIO family. FMN binds covalently to cysteine after exposure to blue light and is reversed in the dark.

The protein localises to the nucleus. The protein operates within protein modification; protein ubiquitination. In terms of biological role, component of an E3 ubiquitin ligase complex that plays a central role in blue light-dependent circadian cycles. Acts as a blue light photoreceptor, due to the presence of FMN, that mediates light-regulated protein degradation of critical clock components by targeting them to the proteasome complex. The sequence is that of Putative adagio-like protein 2 from Oryza sativa subsp. japonica (Rice).